The following is a 138-amino-acid chain: Nucleoside diphosphate kinase (138 aa).

Positions 9, 57, 85, 91, 102, and 112 each coordinate ATP. Histidine 115 serves as the catalytic Pros-phosphohistidine intermediate.

The protein belongs to the NDK family. As to quaternary structure, homotetramer. Requires Mg(2+) as cofactor.

The protein localises to the cytoplasm. It catalyses the reaction a 2'-deoxyribonucleoside 5'-diphosphate + ATP = a 2'-deoxyribonucleoside 5'-triphosphate + ADP. It carries out the reaction a ribonucleoside 5'-diphosphate + ATP = a ribonucleoside 5'-triphosphate + ADP. In terms of biological role, major role in the synthesis of nucleoside triphosphates other than ATP. The ATP gamma phosphate is transferred to the NDP beta phosphate via a ping-pong mechanism, using a phosphorylated active-site intermediate. This chain is Nucleoside diphosphate kinase, found in Lawsonia intracellularis (strain PHE/MN1-00).